The sequence spans 519 residues: Probable cytosol aminopeptidase (519 aa).

The Mn(2+) site is built by lysine 251 and aspartate 256. The active site involves lysine 263. The Mn(2+) site is built by aspartate 274, aspartate 333, and glutamate 335. Arginine 337 is a catalytic residue. A compositionally biased stretch (low complexity) spans 487–502 (VAPAAPAAPAAPAARP). Residues 487-519 (VAPAAPAAPAAPAARPAAKRTGRSQGGLKRTAP) are disordered.

Belongs to the peptidase M17 family. Mn(2+) serves as cofactor.

The protein localises to the cytoplasm. It catalyses the reaction Release of an N-terminal amino acid, Xaa-|-Yaa-, in which Xaa is preferably Leu, but may be other amino acids including Pro although not Arg or Lys, and Yaa may be Pro. Amino acid amides and methyl esters are also readily hydrolyzed, but rates on arylamides are exceedingly low.. The enzyme catalyses Release of an N-terminal amino acid, preferentially leucine, but not glutamic or aspartic acids.. Presumably involved in the processing and regular turnover of intracellular proteins. Catalyzes the removal of unsubstituted N-terminal amino acids from various peptides. This Verminephrobacter eiseniae (strain EF01-2) protein is Probable cytosol aminopeptidase.